The chain runs to 350 residues: UDP-N-acetylenolpyruvoylglucosamine reductase (350 aa).

Residues H24 to L195 enclose the FAD-binding PCMH-type domain. The active site involves R172. Catalysis depends on S245, which acts as the Proton donor. Residue E342 is part of the active site.

This sequence belongs to the MurB family. It depends on FAD as a cofactor.

It localises to the cytoplasm. The catalysed reaction is UDP-N-acetyl-alpha-D-muramate + NADP(+) = UDP-N-acetyl-3-O-(1-carboxyvinyl)-alpha-D-glucosamine + NADPH + H(+). Its pathway is cell wall biogenesis; peptidoglycan biosynthesis. Functionally, cell wall formation. The chain is UDP-N-acetylenolpyruvoylglucosamine reductase from Xanthomonas campestris pv. campestris (strain B100).